Reading from the N-terminus, the 217-residue chain is Somatotropin (217 aa).

A signal peptide spans 1–27; that stretch reads MMAAGPRASLLLAFALLCLPWTQEVGA. Residue His46 coordinates Zn(2+). An intrachain disulfide couples Cys79 to Cys190. Position 132 is a phosphoserine (Ser132). Residue Glu199 participates in Zn(2+) binding. A disulfide bridge connects residues Cys207 and Cys215.

Belongs to the somatotropin/prolactin family.

The protein resides in the secreted. Functionally, plays an important role in growth control. Its major role in stimulating body growth is to stimulate the liver and other tissues to secrete IGF1. It stimulates both the differentiation and proliferation of myoblasts. It also stimulates amino acid uptake and protein synthesis in muscle and other tissues. The chain is Somatotropin (GH1) from Cervus elaphus (Red deer).